The chain runs to 215 residues: Eukaryotic translation initiation factor 4E-1A (215 aa).

Residues 1-14 (MATAEPETSTNPSN) show a composition bias toward low complexity. Residues 1 to 23 (MATAEPETSTNPSNSEEKNEENE) form a disordered region. MRNA is bound by residues 54–55 (WQ), 100–101 (WE), 155–160 (RTKGDK), and 203–205 (TKS).

This sequence belongs to the eukaryotic initiation factor 4E family. Interacts with eif4ebp3l. Expressed in all tissues examined, including gill, fin, heart, intestine, muscle, ovary and testis.

The protein localises to the cytoplasm. It localises to the nucleus. In terms of biological role, recognizes and binds the 7-methylguanosine (m7G)-containing mRNA cap during an early step in the initiation of protein synthesis and facilitates ribosome binding by inducing the unwinding of the mRNAs secondary structures. Also promotes export of a subset of mRNAs from the nucleus to the cytoplasm. The protein is Eukaryotic translation initiation factor 4E-1A of Danio rerio (Zebrafish).